The primary structure comprises 436 residues: T-box transcription factor TBX6 (436 aa).

The segment at residues 100 to 273 (LWKEFSAVGT…ANPFAKGFRE (174 aa)) is a DNA-binding region (T-box). Over residues 274 to 284 (NGRNCKRERDA) the composition is skewed to basic and acidic residues. Disordered regions lie at residues 274-344 (NGRN…CGGP) and 360-383 (PSHL…APYS). Low complexity predominate over residues 332 to 344 (EAASASAPPCGGP).

Its subcellular location is the nucleus. Its function is as follows. T-box transcription factor that plays an essential role in the determination of the fate of axial stem cells: neural vs mesodermal. Acts in part by down-regulating, a specific enhancer (N1) of SOX2, to inhibit neural development. Seems to play also an essential role in left/right axis determination and acts through effects on Notch signaling around the node as well as through an effect on the morphology and motility of the nodal cilia. In Mus musculus (Mouse), this protein is T-box transcription factor TBX6 (Tbx6).